The sequence spans 356 residues: Phosphoribosylformylglycinamidine cyclo-ligase (356 aa).

This sequence belongs to the AIR synthase family.

The protein localises to the cytoplasm. It carries out the reaction 2-formamido-N(1)-(5-O-phospho-beta-D-ribosyl)acetamidine + ATP = 5-amino-1-(5-phospho-beta-D-ribosyl)imidazole + ADP + phosphate + H(+). It functions in the pathway purine metabolism; IMP biosynthesis via de novo pathway; 5-amino-1-(5-phospho-D-ribosyl)imidazole from N(2)-formyl-N(1)-(5-phospho-D-ribosyl)glycinamide: step 2/2. The chain is Phosphoribosylformylglycinamidine cyclo-ligase from Acinetobacter baumannii (strain AB307-0294).